Reading from the N-terminus, the 994-residue chain is Sarcoplasmic/endoplasmic reticulum calcium ATPase 1 (994 aa).

Residues 1–48 (MENAHAKTAEECLAFFGVNESVGLSGEQVRRALEKYGHNELPAEEGKT) are Cytoplasmic-facing. Residues 49–69 (IWELVVEQFEDLLVRILLLAA) traverse the membrane as a helical segment. Over 70 to 89 (CISFVLAWFEEGEETITAFV) the chain is Lumenal. A helical membrane pass occupies residues 90 to 110 (EPFVILLILIANAVVGVWQER). Over 111–253 (NAENAIEALK…QDKTPLQQKL (143 aa)) the chain is Cytoplasmic. A helical membrane pass occupies residues 254 to 273 (DEFGEQLSKVISLICVAVWL). Residues 274–295 (INIGHFNDPVHGGSWIRGAIYY) lie on the Lumenal side of the membrane. Residues 296 to 313 (FKIAVALAVAAIPEGLPA) form a helical membrane-spanning segment. 4 residues coordinate Ca(2+): Val-304, Ala-305, Ile-307, and Glu-309. Residues 314 to 757 (VITTCLALGT…EEGRAIYNNM (444 aa)) lie on the Cytoplasmic side of the membrane. The 4-aspartylphosphate intermediate role is filled by Asp-351. The Mg(2+) site is built by Asp-351 and Thr-353. 10 residues coordinate ATP: Thr-353, Glu-442, Arg-489, Lys-515, Arg-560, Thr-625, Gly-626, Asp-627, Arg-678, and Lys-684. Asp-703 contributes to the Mg(2+) binding site. Asn-706 provides a ligand contact to ATP. A helical membrane pass occupies residues 758-777 (KQFIRYLISSNVGEVVCIFL). The Ca(2+) site is built by Asn-768 and Glu-771. Residues 778–787 (TAALGLPEAL) lie on the Lumenal side of the membrane. A helical transmembrane segment spans residues 788-808 (IPVQLLWVNLVTDGLPATALG). An interaction with PLN region spans residues 788–808 (IPVQLLWVNLVTDGLPATALG). Ca(2+)-binding residues include Asn-796, Thr-799, and Asp-800. Residues 809–828 (FNPPDLDIMDKPPRSPKEPL) lie on the Cytoplasmic side of the membrane. A helical membrane pass occupies residues 829–851 (ISGWLFFRYLAIGGYVGAATVGA). Residues 852–897 (AAWWFLYAEDGPSLTYHQLTHFMQCTHHNAEFEGVDCDIFESPVPM) lie on the Lumenal side of the membrane. The cysteines at positions 876 and 888 are disulfide-linked. The chain crosses the membrane as a helical span at residues 898–917 (TMALSVLVTIEMCNALNSLS). Glu-908 is a binding site for Ca(2+). Over 918–930 (ENQSLLRMPPWVN) the chain is Cytoplasmic. A helical membrane pass occupies residues 931-949 (IWLVGSICLSMSLHFVILY). Residues 932–943 (WLVGSICLSMSL) form an interaction with PLN region. Topologically, residues 950-964 (VDPLPMIFKLTHLDL) are lumenal. The chain crosses the membrane as a helical span at residues 965-985 (AHWLVVLRISFPVILLDEALK). The Cytoplasmic segment spans residues 986–994 (FVARNYLEA).

Belongs to the cation transport ATPase (P-type) (TC 3.A.3) family. Type IIA subfamily. Interacts with sarcolipin (SLN). Interacts with phospholamban (PLN). Interacts with myoregulin (MRLN). Interacts with DWORF. The cofactor is Mg(2+).

It is found in the endoplasmic reticulum membrane. It localises to the sarcoplasmic reticulum membrane. It catalyses the reaction Ca(2+)(in) + ATP + H2O = Ca(2+)(out) + ADP + phosphate + H(+). With respect to regulation, inhibited by sarcolipin (SLN) and myoregulin (MRLN). Also shown to be inhibited by phospholamban (PLN) in vitro. Enhanced by DWORF; DWORF increases activity by displacing sarcolipin (SLN), phospholamban (PLN) and myoregulin (MRLN). Its function is as follows. Key regulator of striated muscle performance by acting as the major Ca(2+) ATPase responsible for the reuptake of cytosolic Ca(2+) into the sarcoplasmic reticulum. Catalyzes the hydrolysis of ATP coupled with the translocation of calcium from the cytosol to the sarcoplasmic reticulum lumen. Contributes to calcium sequestration involved in muscular excitation/contraction. The protein is Sarcoplasmic/endoplasmic reticulum calcium ATPase 1 (ATP2A1) of Gallus gallus (Chicken).